Consider the following 295-residue polypeptide: uncharacterized protein (295 aa).

This is an uncharacterized protein from Rickettsia prowazekii (strain Madrid E).